A 155-amino-acid polypeptide reads, in one-letter code: Putative pre-16S rRNA nuclease (155 aa).

The protein belongs to the YqgF nuclease family.

The protein resides in the cytoplasm. In terms of biological role, could be a nuclease involved in processing of the 5'-end of pre-16S rRNA. The chain is Putative pre-16S rRNA nuclease from Paramagnetospirillum magneticum (strain ATCC 700264 / AMB-1) (Magnetospirillum magneticum).